The following is a 170-amino-acid chain: Inosine/xanthosine triphosphatase (170 aa).

This sequence belongs to the YjjX NTPase family. In terms of assembly, homodimer. It depends on Mg(2+) as a cofactor. Mn(2+) is required as a cofactor.

It carries out the reaction XTP + H2O = XDP + phosphate + H(+). The catalysed reaction is ITP + H2O = IDP + phosphate + H(+). Functionally, phosphatase that hydrolyzes non-canonical purine nucleotides such as XTP and ITP to their respective diphosphate derivatives. Probably excludes non-canonical purines from DNA/RNA precursor pool, thus preventing their incorporation into DNA/RNA and avoiding chromosomal lesions. This Aliivibrio fischeri (strain ATCC 700601 / ES114) (Vibrio fischeri) protein is Inosine/xanthosine triphosphatase.